The following is a 296-amino-acid chain: Polyamine aminopropyltransferase (296 aa).

The 236-residue stretch at histidine 16–lysine 251 folds into the PABS domain. Position 46 (glutamine 46) interacts with S-methyl-5'-thioadenosine. Residues histidine 77 and aspartate 101 each contribute to the spermidine site. S-methyl-5'-thioadenosine is bound by residues glutamate 121 and asparagine 152–glycine 153. The active-site Proton acceptor is aspartate 170. Aspartate 170–aspartate 173 provides a ligand contact to spermidine.

Belongs to the spermidine/spermine synthase family. Homodimer or homotetramer.

It localises to the cytoplasm. The catalysed reaction is S-adenosyl 3-(methylsulfanyl)propylamine + putrescine = S-methyl-5'-thioadenosine + spermidine + H(+). Its pathway is amine and polyamine biosynthesis; spermidine biosynthesis; spermidine from putrescine: step 1/1. In terms of biological role, catalyzes the irreversible transfer of a propylamine group from the amino donor S-adenosylmethioninamine (decarboxy-AdoMet) to putrescine (1,4-diaminobutane) to yield spermidine. The sequence is that of Polyamine aminopropyltransferase from Thermotoga petrophila (strain ATCC BAA-488 / DSM 13995 / JCM 10881 / RKU-1).